Here is a 286-residue protein sequence, read N- to C-terminus: Mycolic acid methyltransferase MmaA1 (286 aa).

Residues 32–33 (YT), 71–73 (GCG), 93–98 (TLSRNH), and 122–123 (WE) each bind S-adenosyl-L-methionine. Cys-268 is an active-site residue.

The protein belongs to the CFA/CMAS family.

It participates in lipid metabolism; mycolic acid biosynthesis. Involved in the conversion of a cis-olefin into a trans-olefin with concomitant introduction of an allylic methyl branch at the proximal position of the precursor to both the methoxy and ketomycolic acids. It directly affects the cis- to trans ratio and indirectly affects the keto to methoxy ratio. The polypeptide is Mycolic acid methyltransferase MmaA1 (cmaD) (Mycobacterium bovis (strain ATCC BAA-935 / AF2122/97)).